The sequence spans 586 residues: Phosphomethylpyrimidine synthase (586 aa).

A disordered region spans residues 1–33; sequence MKQSVSAEQIELKSSLPGSKKVYVDGPREGMKV. A compositionally biased stretch (basic and acidic residues) spans 22-33; sequence VYVDGPREGMKV. Residues Asn-193, Met-222, Tyr-251, His-287, 307-309, 348-351, and Glu-387 contribute to the substrate site; these read SRG and DGLR. Zn(2+) is bound at residue His-391. Tyr-414 provides a ligand contact to substrate. His-455 provides a ligand contact to Zn(2+). 3 residues coordinate [4Fe-4S] cluster: Cys-535, Cys-538, and Cys-543.

It belongs to the ThiC family. The cofactor is [4Fe-4S] cluster.

It catalyses the reaction 5-amino-1-(5-phospho-beta-D-ribosyl)imidazole + S-adenosyl-L-methionine = 4-amino-2-methyl-5-(phosphooxymethyl)pyrimidine + CO + 5'-deoxyadenosine + formate + L-methionine + 3 H(+). It functions in the pathway cofactor biosynthesis; thiamine diphosphate biosynthesis. Functionally, catalyzes the synthesis of the hydroxymethylpyrimidine phosphate (HMP-P) moiety of thiamine from aminoimidazole ribotide (AIR) in a radical S-adenosyl-L-methionine (SAM)-dependent reaction. The chain is Phosphomethylpyrimidine synthase from Bacillus cereus (strain B4264).